Here is a 715-residue protein sequence, read N- to C-terminus: Eukaryotic peptide chain release factor GTP-binding subunit (715 aa).

The span at 1-12 (MANASLNGDQSK) shows a compositional bias: polar residues. Disordered regions lie at residues 1–148 (MANA…SLNK) and 168–262 (ATKK…SNSA). The tract at residues 5–128 (SLNGDQSKQQ…PQQQQQQQSQ (124 aa)) is several sort of repeats. Over residues 13 to 25 (QQQQQQQQQQQQQ) the composition is skewed to low complexity. Polar residues predominate over residues 26–37 (NYYNPNAAQSFV). Low complexity-rich tracts occupy residues 39–129 (QGGY…QSQG) and 176–198 (SKPQSKESSPAPAPAASASASAP). The charged stretch occupies residues 129-285 (GMSLADFQKQ…DEIDEEVVKD (157 aa)). Basic and acidic residues-rich tracts occupy residues 199-208 (QEEKKEEKEA) and 218-233 (ETKKETSAPAETKKEA). Residues 290–515 (KDHVSIIFMG…YLDNMDTMNR (226 aa)) form the tr-type G domain. A G1 region spans residues 299–306 (GHVDAGKS). Residue 299–306 (GHVDAGKS) participates in GTP binding. Residues 355–359 (GKTIE) are G2. The residue at position 373 (T373) is a Phosphothreonine. A G3 region spans residues 376–379 (DAPG). Residues 376–380 (DAPGH) and 438–441 (NKMD) contribute to the GTP site. The segment at 438–441 (NKMD) is G4. The tract at residues 479–481 (SGY) is G5.

The protein belongs to the TRAFAC class translation factor GTPase superfamily. Classic translation factor GTPase family. ERF3 subfamily.

It is found in the cytoplasm. In terms of biological role, involved in translation termination. Stimulates the activity of ERF1. Binds guanine nucleotides. The polypeptide is Eukaryotic peptide chain release factor GTP-binding subunit (SUP35) (Candida albicans (Yeast)).